The following is a 399-amino-acid chain: Na(+)/H(+) antiporter NhaA (399 aa).

The next 11 helical transmembrane spans lie at 14–34 (AGGI…NSPL), 59–79 (LIHW…GLEV), 95–115 (SLPT…YLLF), 124–144 (AGWA…MALL), 154–174 (VFLL…IAMF), 177–197 (TDLS…LVGL), 213–233 (LILW…GVII), 261–281 (FIIL…PMSF), 290–310 (VGIA…FSYI), 331–351 (VALM…LAFV), and 363–383 (LGIL…LAKV).

This sequence belongs to the NhaA Na(+)/H(+) (TC 2.A.33) antiporter family.

It localises to the cell inner membrane. It catalyses the reaction Na(+)(in) + 2 H(+)(out) = Na(+)(out) + 2 H(+)(in). Na(+)/H(+) antiporter that extrudes sodium in exchange for external protons. The protein is Na(+)/H(+) antiporter NhaA of Shewanella sediminis (strain HAW-EB3).